A 445-amino-acid chain; its full sequence is Fibrinogen gamma chain (445 aa).

An N-terminal signal peptide occupies residues 1–25; the sequence is MNWSLQLRSFILCWALLLLSPTGLA. Asn-78 is a glycosylation site (N-linked (GlcNAc...) asparagine). Positions 170-416 constitute a Fibrinogen C-terminal domain; that stretch reads RIHDTTGKDC…ETTMKIIPFN (247 aa). A disulfide bridge links Cys-179 with Cys-208. Ca(2+) is bound by residues Asp-344, Asp-346, and Gly-350. Residues Cys-352 and Cys-365 are joined by a disulfide bond. The gamma-chain polymerization, binding amino end of another fibrin alpha chain stretch occupies residues 400–422; that stretch reads TRWYSMKETTMKIIPFNRLSIGD. An Isoglutamyl lysine isopeptide (Gln-Lys) (interchain with K-432) cross-link involves residue Gln-424. The tract at residues 424 to 445 is disordered; it reads QQHHMGGSKQVSVEHEVDVEYP. Phosphoserine is present on Ser-431. An Isoglutamyl lysine isopeptide (Lys-Gln) (interchain with Q-424) cross-link involves residue Lys-432. Residues 435-445 are compositionally biased toward basic and acidic residues; that stretch reads SVEHEVDVEYP.

As to quaternary structure, heterohexamer; disulfide linked. Contains 2 sets of 3 non-identical chains (alpha, beta and gamma). The 2 heterotrimers are in head to head conformation with the N-termini in a small central domain. In terms of processing, conversion of fibrinogen to fibrin is triggered by thrombin, which cleaves fibrinopeptides A and B from alpha and beta chains, and thus exposes the N-terminal polymerization sites responsible for the formation of the soft clot. The soft clot is converted into the hard clot by factor XIIIA which catalyzes the epsilon-(gamma-glutamyl)lysine cross-linking between gamma chains (stronger) and between alpha chains (weaker) of different monomers.

The protein localises to the secreted. Its function is as follows. Together with fibrinogen alpha (FGA) and fibrinogen beta (FGB), polymerizes to form an insoluble fibrin matrix. Has a major function in hemostasis as one of the primary components of blood clots. In addition, functions during the early stages of wound repair to stabilize the lesion and guide cell migration during re-epithelialization. Was originally thought to be essential for platelet aggregation, based on in vitro studies using anticoagulated blood. However, subsequent studies have shown that it is not absolutely required for thrombus formation in vivo. Enhances expression of SELP in activated platelets via an ITGB3-dependent pathway. Maternal fibrinogen is essential for successful pregnancy. Fibrin deposition is also associated with infection, where it protects against IFNG-mediated hemorrhage. May also facilitate the antibacterial immune response via both innate and T-cell mediated pathways. This chain is Fibrinogen gamma chain (Fgg), found in Rattus norvegicus (Rat).